Here is a 248-residue protein sequence, read N- to C-terminus: MIIPALDLINSTVVRLHQGNYQQQRCYSDDPLYYLHNYLRQGAEMLHLVDLTGARDPSARQIKLLTSLLASVKGRTLVQVGGGIRNAADIEVMLQAGAHRVVIGSTAVKKPLEVQQWFKRFGPEALVLALDIRIDTNGKHWVAVSGWMENSGVLLEQVIDQYTQQVELKNILCTDISRDGTLSGMNIELYRLLCGNWPSIAFQSSGGIGSLTDIIKLRNIGVKGVIIGRALLEEKFTLAEAIACWQKE.

Asp-7 functions as the Proton acceptor in the catalytic mechanism. The active-site Proton donor is Asp-131.

Belongs to the HisA/HisF family.

It is found in the cytoplasm. It catalyses the reaction 1-(5-phospho-beta-D-ribosyl)-5-[(5-phospho-beta-D-ribosylamino)methylideneamino]imidazole-4-carboxamide = 5-[(5-phospho-1-deoxy-D-ribulos-1-ylimino)methylamino]-1-(5-phospho-beta-D-ribosyl)imidazole-4-carboxamide. It participates in amino-acid biosynthesis; L-histidine biosynthesis; L-histidine from 5-phospho-alpha-D-ribose 1-diphosphate: step 4/9. The chain is 1-(5-phosphoribosyl)-5-[(5-phosphoribosylamino)methylideneamino] imidazole-4-carboxamide isomerase from Baumannia cicadellinicola subsp. Homalodisca coagulata.